The chain runs to 1222 residues: Serine/threonine-protein kinase WNK4 (1222 aa).

Over residues 1–17 (MLAPRNTETGVPMSQTE) the composition is skewed to polar residues. Positions 1–165 (MLAPRNTETG…DTETQAVATS (165 aa)) are disordered. The span at 90–101 (AGPTRSPPSSSK) shows a compositional bias: low complexity. Position 95 is a phosphoserine (Ser-95). Residues 135-152 (EPPRVPDAAARERRREQE) show a composition bias toward basic and acidic residues. Glycyl lysine isopeptide (Lys-Gly) (interchain with G-Cter in ubiquitin) cross-links involve residues Lys-154 and Lys-172. The Protein kinase domain occupies 171–429 (LKFDIEIGRG…IQDLLAHAFF (259 aa)). Residue Ser-181 coordinates ATP. Glycyl lysine isopeptide (Lys-Gly) (interchain with G-Cter in ubiquitin) cross-links involve residues Lys-183, Lys-223, and Lys-238. ATP contacts are provided by residues 251–254 (TELM) and Lys-301. Asp-318 (proton acceptor) is an active-site residue. Residue Lys-325 forms a Glycyl lysine isopeptide (Lys-Gly) (interchain with G-Cter in ubiquitin) linkage. Phosphoserine; by autocatalysis occurs at positions 328 and 332. Glycyl lysine isopeptide (Lys-Gly) (interchain with G-Cter in ubiquitin) cross-links involve residues Lys-384, Lys-390, Lys-447, and Lys-451. Residues 525–562 (RELEVLPPDSGPPPATVSLAPGPPSAFPPEPEEPEADQ) form a disordered region. Over residues 533–553 (DSGPPPATVSLAPGPPSAFPP) the composition is skewed to pro residues. The segment at 554-564 (EPEEPEADQHQ) is interaction with KLHL3. The residue at position 572 (Ser-572) is a Phosphoserine. Disordered regions lie at residues 626-659 (RSGP…MRKN), 747-809 (DAGP…GAPF), 877-896 (SYPQ…SPPS), and 927-976 (SPGL…AQPL). Low complexity-rich tracts occupy residues 627 to 638 (SGPGSDFSPGDS), 757 to 769 (ALSP…ALPA), 793 to 807 (STSP…SPGA), and 877 to 890 (SYPQ…SLPV). Residues 935-944 (PPAPPGPLPS) show a composition bias toward pro residues. Over residues 953–963 (DQESLSAQTAE) the composition is skewed to polar residues. Lys-990 participates in a covalent cross-link: Glycyl lysine isopeptide (Lys-Gly) (interchain with G-Cter in ubiquitin). The short motif at 996 to 999 (RFQV) is the RFXV motif element. Positions 1000–1087 (TSSKEPAEPP…SSPILSHPSP (88 aa)) are disordered. Residue Ser-1014 is modified to Phosphoserine. Low complexity predominate over residues 1014 to 1032 (SPTLSRSLKLPSPPLTSES). Residues 1044–1056 (ETREALAESDRAA) are compositionally biased toward basic and acidic residues. Glycyl lysine isopeptide (Lys-Gly) (interchain with G-Cter in ubiquitin) cross-links involve residues Lys-1123, Lys-1136, and Lys-1137. Positions 1166–1222 (RRLSKGSFPTSRRNSLQRSDLPGPGIMRRNSLSGSSTGSQEQRASKGVTFAGDIGRM) are disordered. Composition is skewed to polar residues over residues 1172-1183 (SFPTSRRNSLQR) and 1195-1207 (NSLS…SQEQ). Ser-1196 carries the post-translational modification Phosphoserine.

Belongs to the protein kinase superfamily. Ser/Thr protein kinase family. WNK subfamily. As to quaternary structure, interacts with the C-terminal region of KCNJ1. Interacts with WNK1 and WNK3. Interacts with KLHL3. Mg(2+) is required as a cofactor. In terms of processing, autophosphorylated at Ser-328 and Ser-332, promoting its activation. Phosphorylated by WNK1 and WNK3. Phosphorylated at Ser-572 in a MAP3K15/ASK3-dependent process in response to osmotic stress or hypotonic low-chloride stimulation. Post-translationally, ubiquitinated by the BCR(KLHL3) complex, leading to its degradation. Also ubiquitinated by the BCR(KLHL2) complex. Locates to the distal convoluted tubule, the medullary collecting duct and the cortical collecting duct of the kidney. Expressed in pancreatic duct.

The protein localises to the cell junction. The protein resides in the tight junction. It carries out the reaction L-seryl-[protein] + ATP = O-phospho-L-seryl-[protein] + ADP + H(+). The catalysed reaction is L-threonyl-[protein] + ATP = O-phospho-L-threonyl-[protein] + ADP + H(+). Activation requires autophosphorylation of Ser-328 and Ser-332. Autophosphorylation and subsequent activation is inhibited by increases in intracellular ionic strength: Cl(-) potently inhibits WNK4 kinase activity via direct binding. Also inhibited by K(+) ions. Functionally, serine/threonine-protein kinase component of the WNK4-SPAK/OSR1 kinase cascade, which acts as a key regulator of ion transport in the distal nephron and blood pressure. The WNK4-SPAK/OSR1 kinase cascade is composed of WNK4, which mediates phosphorylation and activation of downstream kinases OXSR1/OSR1 and STK39/SPAK. Following activation, OXSR1/OSR1 and STK39/SPAK catalyze phosphorylation of ion cotransporters, such as SLC12A1/NKCC2, SLC12A2/NKCC1, SLC12A3/NCC, SLC12A5/KCC2 or SLC12A6/KCC3, regulating their activity. Acts as a molecular switch that regulates the balance between renal salt reabsorption and K(+) secretion by modulating the activities of renal transporters and channels, including the Na-Cl cotransporter SLC12A3/NCC and the K(+) channel, KCNJ1/ROMK. Regulates NaCl reabsorption in the distal nephron by activating the thiazide-sensitive Na-Cl cotransporter SLC12A3/NCC in distal convoluted tubule cells of kidney: activates SLC12A3/NCC in a OXSR1/OSR1- and STK39/SPAK-dependent process. Also acts as a scaffold protein independently of its protein kinase activity: negatively regulates cell membrane localization of various transporters and channels (CFTR, KCNJ1/ROMK, SLC4A4, SLC26A9 and TRPV4) by clathrin-dependent endocytosis. Also inhibits the activity of the epithelial Na(+) channel (ENaC) SCNN1A, SCNN1B, SCNN1D in a inase-independent mechanism. May also phosphorylate NEDD4L. The chain is Serine/threonine-protein kinase WNK4 from Mus musculus (Mouse).